We begin with the raw amino-acid sequence, 499 residues long: Probable malate:quinone oxidoreductase (499 aa).

The protein belongs to the MQO family. FAD serves as cofactor.

It catalyses the reaction (S)-malate + a quinone = a quinol + oxaloacetate. It functions in the pathway carbohydrate metabolism; tricarboxylic acid cycle; oxaloacetate from (S)-malate (quinone route): step 1/1. This chain is Probable malate:quinone oxidoreductase, found in Exiguobacterium sp. (strain ATCC BAA-1283 / AT1b).